We begin with the raw amino-acid sequence, 281 residues long: Small ribosomal subunit protein uS3 (281 aa).

The KH type-2 domain maps to 38–106; the sequence is IRRLLSTGLE…QVQLNILEVK (69 aa). The tract at residues 218–281 is disordered; sequence APAGAERARR…VTHEPQIAES (64 aa). The span at 238–256 shows a compositional bias: low complexity; that stretch reads SGAAGTTVTGTDAGRAVGG.

It belongs to the universal ribosomal protein uS3 family. As to quaternary structure, part of the 30S ribosomal subunit. Forms a tight complex with proteins S10 and S14.

Binds the lower part of the 30S subunit head. Binds mRNA in the 70S ribosome, positioning it for translation. This is Small ribosomal subunit protein uS3 from Mycobacterium leprae (strain Br4923).